The following is a 206-amino-acid chain: Large ribosomal subunit protein uL4 (206 aa).

Residues 47-77 (GTQSTKTRSEVRGGGIKPWRQKGTGRARQGS) form a disordered region.

It belongs to the universal ribosomal protein uL4 family. Part of the 50S ribosomal subunit.

In terms of biological role, one of the primary rRNA binding proteins, this protein initially binds near the 5'-end of the 23S rRNA. It is important during the early stages of 50S assembly. It makes multiple contacts with different domains of the 23S rRNA in the assembled 50S subunit and ribosome. Forms part of the polypeptide exit tunnel. The protein is Large ribosomal subunit protein uL4 of Clostridium beijerinckii (strain ATCC 51743 / NCIMB 8052) (Clostridium acetobutylicum).